A 109-amino-acid polypeptide reads, in one-letter code: Large ribosomal subunit protein uL24 (109 aa).

Belongs to the universal ribosomal protein uL24 family. In terms of assembly, part of the 50S ribosomal subunit.

Functionally, one of two assembly initiator proteins, it binds directly to the 5'-end of the 23S rRNA, where it nucleates assembly of the 50S subunit. Its function is as follows. One of the proteins that surrounds the polypeptide exit tunnel on the outside of the subunit. This is Large ribosomal subunit protein uL24 from Rickettsia africae (strain ESF-5).